Reading from the N-terminus, the 116-residue chain is Large ribosomal subunit protein eL22B (116 aa).

It belongs to the eukaryotic ribosomal protein eL22 family.

This is Large ribosomal subunit protein eL22B (rpl22a) from Dictyostelium discoideum (Social amoeba).